We begin with the raw amino-acid sequence, 417 residues long: Serine hydroxymethyltransferase (417 aa).

Residues L122 and 126–128 contribute to the (6S)-5,6,7,8-tetrahydrofolate site; that span reads GHL. At K230 the chain carries N6-(pyridoxal phosphate)lysine. 355-357 contributes to the (6S)-5,6,7,8-tetrahydrofolate binding site; it reads SPF.

Belongs to the SHMT family. As to quaternary structure, homodimer. Requires pyridoxal 5'-phosphate as cofactor.

It is found in the cytoplasm. The enzyme catalyses (6R)-5,10-methylene-5,6,7,8-tetrahydrofolate + glycine + H2O = (6S)-5,6,7,8-tetrahydrofolate + L-serine. It participates in one-carbon metabolism; tetrahydrofolate interconversion. It functions in the pathway amino-acid biosynthesis; glycine biosynthesis; glycine from L-serine: step 1/1. Its function is as follows. Catalyzes the reversible interconversion of serine and glycine with tetrahydrofolate (THF) serving as the one-carbon carrier. This reaction serves as the major source of one-carbon groups required for the biosynthesis of purines, thymidylate, methionine, and other important biomolecules. Also exhibits THF-independent aldolase activity toward beta-hydroxyamino acids, producing glycine and aldehydes, via a retro-aldol mechanism. The chain is Serine hydroxymethyltransferase from Francisella tularensis subsp. mediasiatica (strain FSC147).